Here is a 160-residue protein sequence, read N- to C-terminus: Large ribosomal subunit protein eL29 (160 aa).

Over residues 1–26 the composition is skewed to basic residues; the sequence is MAKSKNHTTHNQSRKWHRNGIKKPRS. A disordered region spans residues 1 to 32; it reads MAKSKNHTTHNQSRKWHRNGIKKPRSQRYESL. Position 5 is an N6-methyllysine (Lys5). Position 31 is a phosphoserine (Ser31). An N6-acetyllysine modification is found at Lys33. Residues 119-160 are disordered; sequence CRPKSQAKAQSKAKATAGGTAAAPVPPASAPKGAQAPTKAPQ. The span at 121–141 shows a compositional bias: low complexity; that stretch reads PKSQAKAQSKAKATAGGTAAA.

Belongs to the eukaryotic ribosomal protein eL29 family. Component of the large ribosomal subunit.

The protein resides in the cytoplasm. Its function is as follows. Component of the large ribosomal subunit. The ribosome is a large ribonucleoprotein complex responsible for the synthesis of proteins in the cell. This is Large ribosomal subunit protein eL29 (RPL29) from Sus scrofa (Pig).